A 217-amino-acid polypeptide reads, in one-letter code: uncharacterized protein (217 aa).

The protein to M.tuberculosis Rv2926c.

This is an uncharacterized protein from Mycobacterium leprae (strain TN).